A 294-amino-acid chain; its full sequence is Negative regulator of the PHO system (294 aa).

Residues 7–289 enclose the Protein kinase domain; it reads FQQLEKLGEG…ARQSLEHPWF (283 aa). ATP-binding positions include 13–21 and lysine 36; that span reads LGEGTYATV. The active-site Proton acceptor is aspartate 130.

Belongs to the protein kinase superfamily. CMGC Ser/Thr protein kinase family. CDC2/CDKX subfamily. In terms of assembly, interacts with a number of cyclins.

It catalyses the reaction L-seryl-[protein] + ATP = O-phospho-L-seryl-[protein] + ADP + H(+). The catalysed reaction is L-threonyl-[protein] + ATP = O-phospho-L-threonyl-[protein] + ADP + H(+). Functionally, when phosphate concentrations are high it phosphorylates the PHO4 transcription factor thus establishing repression. The protein is Negative regulator of the PHO system (PHO85) of Yarrowia lipolytica (strain CLIB 122 / E 150) (Yeast).